A 332-amino-acid polypeptide reads, in one-letter code: Homeobox protein SIX3 (332 aa).

Positions 72–119 are interaction with TLE5; that stretch reads APPEELSMFQLPTLNFSPEQVASVCETLEETGDIERLGRFLWSLPVAP. A DNA-binding region (homeobox) is located at residues 206–265; it reads GEQKTHCFKERTRSLLREWYLQDPYPNPSKKRELAQATGLTPTQVGNWFKNRRQRDRAAA. The bind to RHO promoter stretch occupies residues 232-234; that stretch reads NPS. 2 disordered regions span residues 232–251 and 258–332; these read NPSK…TQVG and RQRD…ECDV. Low complexity predominate over residues 293–309; that stretch reads SAESPSTAASPTTSVSS. Over residues 316–332 the composition is skewed to polar residues; it reads TGTSILSVTSSDSECDV.

It belongs to the SIX/Sine oculis homeobox family. Interacts with EYA4; translocates EYA4 from the cytoplasm to the nucleus and promotes activation of their target genes. Interacts with MTA1 and HDAC2; represses its own transcription. Interacts with MTA1; facilitates the binding of SIX3 to the core DNA motif of SIX3 promoter. Interacts with EYA1; promotes EYA1 translocation to the nucleus. Interacts with TLE1 and TLE5 (via Q domain); can act in combination with either TLE1 and/or TLE5 leading to transcriptional repression or activation, respectively. Interacts (via homeobox) with NR4A3; differentially regulates the transcriptional activities NR4A3. Interacts with GMNN. Interacts with TLE4.

It localises to the nucleus. In terms of biological role, transcriptional regulator which can act as both a transcriptional repressor and activator by binding a ATTA homeodomain core recognition sequence on these target genes. During forebrain development represses WNT1 expression allowing zona limitans intrathalamica formation and thereby ensuring proper anterio-posterior patterning of the diencephalon and formation of the rostral diencephalon. Acts as a direct upstream activator of SHH expression in the rostral diencephalon ventral midline and that in turn SHH maintains its expression. In addition, Six3 activity is required for the formation of the telencephalon. During postnatal stages of brain development is necessary for ependymal cell maturation by promoting the maturation of radial glia into ependymal cells through regulation of neuroblast proliferation and migration. Acts on the proliferation and differentiation of neural progenitor cells through activating transcription of CCND1 and CCND2. During early lens formation plays a role in lens induction and specification by activating directly PAX6 in the presumptive lens ectoderm. In turn PAX6 activates SIX3 resulting in activation of PDGFRA and CCND1 promoting cell proliferation. Also is required for the neuroretina development by directly suppressing WNT8B expression in the anterior neural plate territory. Its action during retina development and lens morphogenesis is TLE5 and TLE4-dependent manner. Furthermore, during eye development regulates several genes expression. Before and during early lens development represses the CRYGF promoter by binding a SIX repressor element. Directly activates RHO transcription, or cooperates with CRX or NRL. Six3 also functions in the formation of the proximodistal axis of the optic cup, and promotes the formation of optic vesicles-like structures. During pituitary development, acts in parallel or alternatively with HESX1 to control cell proliferation through Wnt/beta-catenin pathway. Plays a role in eye development by suppressing WNT1 expression and in dorsal-ventral patterning by repressing BMP signaling pathway. This is Homeobox protein SIX3 (SIX3) from Homo sapiens (Human).